The chain runs to 96 residues: (4S)-4-hydroxy-5-phosphonooxypentane-2,3-dione isomerase (96 aa).

The 90-residue stretch at 2 to 91 (HVTLVEINVH…MTGPRKKRLF (90 aa)) folds into the ABM domain.

Belongs to the LsrG family. Homodimer.

The protein localises to the cytoplasm. It catalyses the reaction (2S)-2-hydroxy-3,4-dioxopentyl phosphate = 3-hydroxy-2,4-dioxopentyl phosphate. In terms of biological role, involved in the degradation of phospho-AI-2, thereby terminating induction of the lsr operon and closing the AI-2 signaling cycle. Catalyzes the conversion of (4S)-4-hydroxy-5-phosphonooxypentane-2,3-dione (P-DPD) to 3-hydroxy-5-phosphonooxypentane-2,4-dione (P-HPD). The polypeptide is (4S)-4-hydroxy-5-phosphonooxypentane-2,3-dione isomerase (Escherichia coli O9:H4 (strain HS)).